Here is a 348-residue protein sequence, read N- to C-terminus: Protein RecA (348 aa).

66 to 73 contributes to the ATP binding site; that stretch reads GPESSGKT.

This sequence belongs to the RecA family.

The protein resides in the cytoplasm. Functionally, can catalyze the hydrolysis of ATP in the presence of single-stranded DNA, the ATP-dependent uptake of single-stranded DNA by duplex DNA, and the ATP-dependent hybridization of homologous single-stranded DNAs. It interacts with LexA causing its activation and leading to its autocatalytic cleavage. This Legionella pneumophila (strain Paris) protein is Protein RecA.